Here is a 481-residue protein sequence, read N- to C-terminus: ATP synthase subunit beta, chloroplastic (481 aa).

161-168 (GGAGVGKT) contacts ATP.

This sequence belongs to the ATPase alpha/beta chains family. In terms of assembly, F-type ATPases have 2 components, CF(1) - the catalytic core - and CF(0) - the membrane proton channel. CF(1) has five subunits: alpha(3), beta(3), gamma(1), delta(1), epsilon(1). CF(0) has four main subunits: a(1), b(1), b'(1) and c(9-12).

The protein localises to the plastid. It localises to the chloroplast thylakoid membrane. The catalysed reaction is ATP + H2O + 4 H(+)(in) = ADP + phosphate + 5 H(+)(out). Produces ATP from ADP in the presence of a proton gradient across the membrane. The catalytic sites are hosted primarily by the beta subunits. In Pylaiella littoralis (Seaweed), this protein is ATP synthase subunit beta, chloroplastic.